Here is a 159-residue protein sequence, read N- to C-terminus: 6,7-dimethyl-8-ribityllumazine synthase (159 aa).

5-amino-6-(D-ribitylamino)uracil is bound by residues Trp27, 62 to 64 (SWE), and 86 to 88 (VLI). 91 to 92 (ST) provides a ligand contact to (2S)-2-hydroxy-3-oxobutyl phosphate. Residue His94 is the Proton donor of the active site. Leu119 is a 5-amino-6-(D-ribitylamino)uracil binding site. A (2S)-2-hydroxy-3-oxobutyl phosphate-binding site is contributed by Arg133.

Homopentamer.

The catalysed reaction is (2S)-2-hydroxy-3-oxobutyl phosphate + 5-amino-6-(D-ribitylamino)uracil = 6,7-dimethyl-8-(1-D-ribityl)lumazine + phosphate + 2 H2O + H(+). The protein operates within cofactor biosynthesis; riboflavin biosynthesis; riboflavin from 2-hydroxy-3-oxobutyl phosphate and 5-amino-6-(D-ribitylamino)uracil: step 1/2. Its activity is regulated as follows. Competitively inhibited by riboflavin (Ki of 17 uM). Catalyzes the formation of 6,7-dimethyl-8-ribityllumazine by condensation of 5-amino-6-(D-ribitylamino)uracil with 3,4-dihydroxy-2-butanone 4-phosphate. This is the penultimate step in the biosynthesis of riboflavin. Also binds riboflavin with an unexpected high affinity. The protein is 6,7-dimethyl-8-ribityllumazine synthase (rib4) of Schizosaccharomyces pombe (strain 972 / ATCC 24843) (Fission yeast).